The primary structure comprises 124 residues: uncharacterized protein (124 aa).

It is found in the cytoplasm. It localises to the nucleus. This is an uncharacterized protein from Schizosaccharomyces pombe (strain 972 / ATCC 24843) (Fission yeast).